The primary structure comprises 26 residues: U1-poneritoxin-Ni1b (26 aa).

The protein belongs to the non-disulfide-bridged peptide (NDBP) superfamily. Medium-length antimicrobial peptide (group 3) family. Ponericin-W subfamily. Expressed by the venom gland.

It is found in the secreted. It localises to the target cell membrane. Has a broad spectrum of activity against both Gram-positive and Gram-negative bacteria and S.cerevisiae. Has insecticidal and hemolytic activities. May act by disrupting the integrity of the bacterial cell membrane. The chain is U1-poneritoxin-Ni1b from Neoponera inversa (Ant).